The following is a 412-amino-acid chain: NF-kappa-B essential modulator (412 aa).

The disordered stretch occupies residues 1–48 (MNKHPWKNQLSEMVQPSGGPAEDQDMLGEESSLGKPAMLHLPSEQGTP). Residues 1–197 (MNKHPWKNQL…REVLQQQHSV (197 aa)) are required for interaction with and ubiquitination by MARCHF2. A phosphoserine; by IKKB mark is found at S31 and S43. The segment at 44-111 (EQGTPETLQR…KLVERLSLEK (68 aa)) is interaction with CHUK/IKBKB. Residues 49 to 345 (ETLQRCLEEN…LKVGCHESAR (297 aa)) are a coiled coil. The residue at position 68 (S68) is a Phosphoserine. S85 bears the Phosphoserine; by ATM mark. Residues K111, K139, K143, K226, and K246 each participate in a glycyl lysine isopeptide (Lys-Gly) (interchain with G-Cter in ubiquitin) cross-link. The interaction with TANK stretch occupies residues 150-250 (LGELQESQSR…YDSHIKSSKG (101 aa)). Positions 242-343 (DSHIKSSKGM…NKLKVGCHES (102 aa)) are ubiquitin-binding (UBAN). Residues 246 to 358 (KSSKGMQLED…MRKRHVETPQ (113 aa)) form a self-association region. A required for interaction with TNFAIP3 region spans residues 249–412 (KGMQLEDLRQ…LQIHVMECIE (164 aa)). The segment at 250–339 (GMQLEDLRQQ…QREFNKLKVG (90 aa)) is linear polyubiquitin-binding, does not bind to 'Lys-63'-linked polyubiquitin. K270 participates in a covalent cross-link: Glycyl lysine isopeptide (Lys-Gly) (interchain with G-Cter in SUMO); alternate. Residue K270 forms a Glycyl lysine isopeptide (Lys-Gly) (interchain with G-Cter in ubiquitin); alternate linkage. Glycyl lysine isopeptide (Lys-Gly) (interchain with G-Cter in ubiquitin) cross-links involve residues K276, K278, K285, and K295. Residue K302 forms a Glycyl lysine isopeptide (Lys-Gly) (interchain with G-Cter in SUMO); alternate linkage. K302 is covalently cross-linked (Glycyl lysine isopeptide (Lys-Gly) (interchain with G-Cter in ubiquitin); alternate). Glycyl lysine isopeptide (Lys-Gly) (interchain with G-Cter in ubiquitin) cross-links involve residues K314, K318, and K319. A leucine-zipper region spans residues 315-336 (LVEKKEYLQEQLEQLQREFNKL). S369 carries the post-translational modification Phosphoserine; by IKKB. The tract at residues 375-412 (SNQRRSPPEEPPDFCCPKCQYQAPDMDTLQIHVMECIE) is interaction with CYLD. Position 380 is a phosphoserine (S380). The segment at 382–412 (PEEPPDFCCPKCQYQAPDMDTLQIHVMECIE) adopts a CCHC NOA-type zinc-finger fold. A Zn(2+)-binding site is contributed by C390. Residue K392 forms a Glycyl lysine isopeptide (Lys-Gly) (interchain with G-Cter in ubiquitin) linkage. Positions 393, 406, and 410 each coordinate Zn(2+).

Homodimer; disulfide-linked. Component of the I-kappa-B-kinase (IKK) core complex consisting of CHUK, IKBKB and IKBKG; probably four alpha/CHUK-beta/IKBKB dimers are associated with four gamma/IKBKG subunits. The IKK core complex seems to associate with regulatory or adapter proteins to form a IKK-signalosome holo-complex. The IKK complex associates with TERF2IP/RAP1, leading to promote IKK-mediated phosphorylation of RELA/p65. Part of a complex composed of NCOA2, NCOA3, CHUK/IKKA, IKBKB, IKBKG and CREBBP. Interacts with COPS3, CYLD, NALP2, TRPC4AP and PIDD1. Interacts with ATM; the complex is exported from the nucleus. Interacts with TRAF6. Interacts with IKBKE. Interacts with TANK; the interaction is enhanced by IKBKE and TBK1. Part of a ternary complex consisting of TANK, IKBKB and IKBKG. Interacts with ZFAND5. Interacts with RIPK2. Interacts with TNIP1 and TNFAIP3; TNIP1 facilitates the TNFAIP3-mediated de-ubiquitination of IKBKG. Interacts with TNFAIP3; the interaction is induced by TNF stimulation and by polyubiquitin. Binds (via UBAN region) polyubiquitin; binds both 'Lys-63'-linked and linear polyubiquitin, with higher affinity for linear ubiquitin. Interacts with NLRP10. Interacts with TANK; this interaction increases in response to DNA damage. Interacts with USP10; this interaction increases in response to DNA damage. Interacts with ZC3H12A; this interaction increases in response to DNA damage. Interacts with IFIT5; the interaction synergizes the recruitment of IKK to MAP3K7 and enhances IKK phosphorylation. Interacts with TRIM29; this interaction induces IKBKG/NEMO ubiquitination and proteolytic degradation. Interacts with TRIM13; this interaction leads to IKBKG/NEMO ubiquitination. Interacts with ARFIP2. Interacts with RIPK1. Interacts with (ubiquitinated) BCL10; interaction with polyubiquitinated BCL10 via both 'Lys-63'-linked and linear ubiquitin is required for TCR-induced NF-kappa-B activation. Interacts with MARCHF2; during the late stages of macrophage viral and bacterial infection; the interaction leads to ubiquitination and degradation of IKBKG/NEMO. In terms of processing, phosphorylation at Ser-68 attenuates aminoterminal homodimerization. Polyubiquitinated on Lys-278 via 'Lys-63'-linked ubiquitin; the ubiquitination is mediated downstream of NOD2 and RIPK2 and probably plays a role in signaling by facilitating interactions with ubiquitin domain-containing proteins and activates the NF-kappa-B pathway. Polyubiquitinated on Lys-278 and Lys-302 through 'Lys-63'-linked ubiquitin; the ubiquitination is mediated by BCL10, MALT1 and TRAF6 and probably plays a role in signaling by facilitating interactions with ubiquitin domain-containing proteins and activates the NF-kappa-B pathway. Monoubiquitinated on Lys-270 and Lys-302; promotes nuclear export. Polyubiquitinated through 'Lys-27' by TRIM23; involved in antiviral innate and inflammatory responses. Linear polyubiquitinated on Lys-111, Lys-143, Lys-226, Lys-246, Lys-270, Lys-278, Lys-285, Lys-295, Lys-302 and Lys-319; the head-to-tail polyubiquitination is mediated by the LUBAC complex and plays a key role in NF-kappa-B activation. Deubiquitinated by USP10 in a TANK-dependent and -independent manner, leading to the negative regulation of NF-kappa-B signaling upon DNA damage. Ubiquitinated at Lys-319 by MARCHF2 following bacterial and viral infection which leads to its degradation. Polyubiquitinated via 'Lys-29'-linked ubiquitin; leading to lysosomal degradation. Post-translationally, sumoylated on Lys-270 and Lys-302 with SUMO1; the modification results in phosphorylation of Ser-85 by ATM leading to a replacement of the sumoylation by mono-ubiquitination on these residues. In terms of processing, neddylated by TRIM40, resulting in stabilization of NFKBIA and down-regulation of NF-kappa-B activity.

It localises to the cytoplasm. The protein resides in the nucleus. In terms of biological role, regulatory subunit of the IKK core complex which phosphorylates inhibitors of NF-kappa-B thus leading to the dissociation of the inhibitor/NF-kappa-B complex and ultimately the degradation of the inhibitor. Its binding to scaffolding polyubiquitin plays a key role in IKK activation by multiple signaling receptor pathways. Can recognize and bind both 'Lys-63'-linked and linear polyubiquitin upon cell stimulation, with a much highr affinity for linear polyubiquitin. Could be implicated in NF-kappa-B-mediated protection from cytokine toxicity. Essential for viral activation of IRF3. Involved in TLR3- and IFIH1-mediated antiviral innate response; this function requires 'Lys-27'-linked polyubiquitination. This is NF-kappa-B essential modulator (Ikbkg) from Mus musculus (Mouse).